Reading from the N-terminus, the 387-residue chain is Formate-dependent phosphoribosylglycinamide formyltransferase (387 aa).

Residues 15–16 (EL) and Glu75 each bind N(1)-(5-phospho-beta-D-ribosyl)glycinamide. ATP-binding positions include Arg106, Lys147, 152–157 (SSGKGQ), 187–190 (EEFI), and Glu195. One can recognise an ATP-grasp domain in the interval 111–301 (DLASNELNIR…EFELHLRAVL (191 aa)). Positions 260 and 272 each coordinate Mg(2+). N(1)-(5-phospho-beta-D-ribosyl)glycinamide is bound by residues Asp279, Lys349, and 356–357 (RR).

The protein belongs to the PurK/PurT family. In terms of assembly, homodimer.

The catalysed reaction is N(1)-(5-phospho-beta-D-ribosyl)glycinamide + formate + ATP = N(2)-formyl-N(1)-(5-phospho-beta-D-ribosyl)glycinamide + ADP + phosphate + H(+). The protein operates within purine metabolism; IMP biosynthesis via de novo pathway; N(2)-formyl-N(1)-(5-phospho-D-ribosyl)glycinamide from N(1)-(5-phospho-D-ribosyl)glycinamide (formate route): step 1/1. In terms of biological role, involved in the de novo purine biosynthesis. Catalyzes the transfer of formate to 5-phospho-ribosyl-glycinamide (GAR), producing 5-phospho-ribosyl-N-formylglycinamide (FGAR). Formate is provided by PurU via hydrolysis of 10-formyl-tetrahydrofolate. The polypeptide is Formate-dependent phosphoribosylglycinamide formyltransferase (Prochlorococcus marinus (strain NATL2A)).